Reading from the N-terminus, the 511-residue chain is GMP synthase [glutamine-hydrolyzing] (511 aa).

The 196-residue stretch at Ser-3 to Asp-198 folds into the Glutamine amidotransferase type-1 domain. Residue Cys-80 is the Nucleophile of the active site. Active-site residues include His-172 and Glu-174. One can recognise a GMPS ATP-PPase domain in the interval Trp-199–Arg-386. Ser-226–Thr-232 contributes to the ATP binding site.

As to quaternary structure, homodimer.

It catalyses the reaction XMP + L-glutamine + ATP + H2O = GMP + L-glutamate + AMP + diphosphate + 2 H(+). The protein operates within purine metabolism; GMP biosynthesis; GMP from XMP (L-Gln route): step 1/1. Functionally, catalyzes the synthesis of GMP from XMP. The sequence is that of GMP synthase [glutamine-hydrolyzing] from Chlorobium chlorochromatii (strain CaD3).